The primary structure comprises 393 residues: Short chain dehydrogenase sirQ (393 aa).

Leu-54 is a binding site for NADP(+). The active-site Proton donor is Ser-233. Catalysis depends on Lys-259, which acts as the Lowers pKa of active site Tyr. Position 286 (Ala-286) interacts with NADP(+).

This sequence belongs to the short-chain dehydrogenases/reductases (SDR) family. Highly divergent.

The protein operates within mycotoxin biosynthesis. Functionally, short chain dehydrogenase; part of the gene cluster that mediates the biosynthesis of sirodesmin PL, an epipolythiodioxopiperazine (ETP) characterized by a disulfide bridged cyclic dipeptide and that acts as a phytotoxin which is involved in the blackleg didease of canola. SirD catalyzes the O-prenylation of L-tyrosine (L-Tyr) in the presence of dimethylallyl diphosphate (DMAPP) to yield 4-O-dimethylallyl-L-Tyr, and therefore represents probably the first pathway-specific enzyme in the biosynthesis of sirodesmin PL. 4-O-dimethylallyl-L-Tyr, then undergoes condensation with L-Ser in a reaction catalyzed by the non-ribosomal peptide synthase sirP to form the diketopiperazine (DKP) backbone. Further bishydroxylation of the DKP performed by the cytochrome P450 monooxygenase sirC leads to the production of the intermediate phomamide. This step is essential to form the reactive thiol group required for toxicity of sirodesmin PL. The next steps of sirodesmin biosynthesis are not well understood yet, but some predictions could be made from intermediate compounds identification. Phomamide is converted into phomalizarine via oxidation, probably by sirT. Further oxidation, methylation (by sirM or sirN) and reduction steps convert phomalizarine to deacetyl sirodesmin. Finally, acetyltransferase sirH probably acetylates deacetyl sirodesmin to produce sirodesmin PL. The chain is Short chain dehydrogenase sirQ from Leptosphaeria maculans (Blackleg fungus).